The following is a 268-amino-acid chain: Microtubule-associated protein RP/EB family member 1 (268 aa).

Residue A2 is modified to N-acetylalanine. The Calponin-homology (CH) domain occupies N14 to D116. K66 bears the N6-crotonyllysine mark. Y124 bears the Phosphotyrosine mark. The interaction with MTUS2/TIP150 stretch occupies residues Y124–Y268. Over residues L146–P160 the composition is skewed to low complexity. Positions L146–D191 are disordered. Phosphoserine is present on residues S155 and S165. An EB1 C-terminal domain is found at G185–I255. The interval G185–Y268 is interaction with CDK5RAP2. Residues T206–E211 are interaction with APC. The tract at residues E208–Y268 is DCTN1-binding. K220 is subject to N6-acetyllysine. The APC-binding stretch occupies residues K220–I242. Residues E232–I255 are interaction with SKA1.

It belongs to the MAPRE family. In terms of assembly, homodimer. Heterodimer with MAPRE3. Interacts with DCTN1, DCTN2, TERF1 and dynein intermediate chain. Interaction with DIAPH1 and DIAPH2. Interacts (via C-terminal residues 206-211) with APC (via C-terminal residues 2674-2845); the interaction inhibits association with and bundling of F-actin. Interacts with CLASP2, DST, KIF2C and STIM1; probably required for their targeting to the growing microtubule plus ends. Interacts with MTUS2; interaction is direct and probably targets MTUS2 to microtubules. Interacts (via C-terminus) with SKA1 (via SXIP motif); the interaction is direct and stabilizes the kinetochore-microtubule attachment of the SKA1 complex. Interacts with APC2. Interacts with CLASP1. Interacts with CDK5RAP2. Interacts with MACF1. Interacts with RABL2/RABL2A; binds preferentially to GTP-bound RABL2. Interacts with KCNAB2. Interacts (via C-terminus) with CLIP1. Interacts with SLAIN2 and SLAIN1. Interacts with KIF18B; this interaction is required for efficient accumulation of KIF18B at microtubule plus ends. Interacts with MISP. Interacts with KNSTRN. Interacts with NCKAP5L. Interacts with CAMSAP2. Interacts with PDE4DIP isoform 13/MMG8/SMYLE; this interaction is required for its recruitment to the Golgi apparatus. Forms a pericentrosomal complex with AKAP9, CDK5RAP2 and PDE4DIP isoform 13/MMG8/SMYLE; within this complex, MAPRE1 binding to CDK5RAP2 may be mediated by PDE4DIP. Interacts with AKNA. Interacts with GAS2L1, GAS2L2, and GAS2L3. Interacts with RARRES1 and AGBL2. Post-translationally, acetylation at Lys-220 by KAT2B/PCAF promotes dynamic kinetochore-microtubule interactions in early mitosis. Crotonylated by KAT5 during mitosis, promoting astral microtubule plasticity and dynamic connection between astral microtubules and the cortex during mitotic chromosome segregation, thereby ensuring accurate spindle positioning in mitosis. Decrotonylated by HDAC3.

It localises to the cytoplasm. It is found in the cytoskeleton. The protein localises to the microtubule organizing center. Its subcellular location is the centrosome. The protein resides in the golgi apparatus. It localises to the spindle. It is found in the spindle pole. Functionally, plus-end tracking protein (+TIP) that binds to the plus-end of microtubules and regulates the dynamics of the microtubule cytoskeleton. Recruits other +TIP proteins to microtubules by binding to a conserved Ser-X-Leu-Pro (SXLP) motif in their polypeptide chains. Promotes cytoplasmic microtubule nucleation and elongation. Involved in mitotic spindle positioning by stabilizing microtubules and promoting dynamic connection between astral microtubules and the cortex during mitotic chromosome segregation. Assists chromosome alignment in metaphase by recruiting the SKA complex to the spindle and stabilizing its interactions with microtubule bundles (K-fibers). Also acts as a regulator of minus-end microtubule organization: interacts with the complex formed by AKAP9 and PDE4DIP, leading to recruit CAMSAP2 to the Golgi apparatus, thereby tethering non-centrosomal minus-end microtubules to the Golgi, an important step for polarized cell movement. Promotes elongation of CAMSAP2-decorated microtubule stretches on the minus-end of microtubules. Acts as a regulator of autophagosome transport via interaction with CAMSAP2. Functions downstream of Rho GTPases and DIAPH1 in stable microtubule formation. May play a role in cell migration. This is Microtubule-associated protein RP/EB family member 1 (MAPRE1) from Pongo abelii (Sumatran orangutan).